Reading from the N-terminus, the 372-residue chain is 3-dehydroquinate synthase (372 aa).

NAD(+)-binding positions include 116 to 120, 140 to 141, K153, K162, and 180 to 183; these read GVVGD, TT, and TLNT. Residues E195, H260, and H277 each contribute to the Zn(2+) site.

Belongs to the sugar phosphate cyclases superfamily. Dehydroquinate synthase family. The cofactor is Co(2+). Requires Zn(2+) as cofactor. NAD(+) serves as cofactor.

The protein resides in the cytoplasm. It carries out the reaction 7-phospho-2-dehydro-3-deoxy-D-arabino-heptonate = 3-dehydroquinate + phosphate. Its pathway is metabolic intermediate biosynthesis; chorismate biosynthesis; chorismate from D-erythrose 4-phosphate and phosphoenolpyruvate: step 2/7. Catalyzes the conversion of 3-deoxy-D-arabino-heptulosonate 7-phosphate (DAHP) to dehydroquinate (DHQ). This is 3-dehydroquinate synthase from Prochlorococcus marinus (strain MIT 9303).